The chain runs to 295 residues: Protease Rv3090 (295 aa).

2 helical membrane passes run 2 to 22 and 37 to 57; these read TWQI…ALFW and VTIA…FTIV.

It localises to the cell membrane. The protein resides in the secreted. The protein localises to the cell wall. In terms of biological role, protease that triggers late cell apoptosis and contributes to the pathogenicity and dissemination of M.tuberculosis. In a mouse model of infection, can induce hepatocyte and lung cell apoptosis and cause pathological damage to the spleen, liver and lungs. Specifically stimulates the secretion of inflammatory cytokines including TNF-alpha, IL-6 and IL-1 beta. Can degrade casein in vitro. The polypeptide is Protease Rv3090 (Mycobacterium tuberculosis (strain ATCC 25618 / H37Rv)).